Here is a 299-residue protein sequence, read N- to C-terminus: CCR4-NOT transcription complex subunit 9 (299 aa).

M1 carries the post-translational modification N-acetylmethionine.

The protein belongs to the CNOT9 family. Homodimer. Component of the CCR4-NOT complex; distinct complexes seem to exist that differ in the participation of probably mutually exclusive catalytic subunits. Interacts with MYB, ATF2, RARA, RARB, RARG, RXRA, RXRB and RXRG. Identified in a complex with ATF2 bound to target DNA. Interacts with NANOS2. Directly interacts with ZNF335.

The protein resides in the nucleus. It is found in the cytoplasm. The protein localises to the P-body. Component of the CCR4-NOT complex which is one of the major cellular mRNA deadenylases and is linked to various cellular processes including bulk mRNA degradation, miRNA-mediated repression, translational repression during translational initiation and general transcription regulation. Additional complex functions may be a consequence of its influence on mRNA expression. Involved in down-regulation of MYB- and JUN-dependent transcription. Enhances ligand-dependent transcriptional activity of nuclear hormone receptors. May play a role in cell differentiation. The polypeptide is CCR4-NOT transcription complex subunit 9 (Bos taurus (Bovine)).